The primary structure comprises 574 residues: Proline--tRNA ligase (574 aa).

The protein belongs to the class-II aminoacyl-tRNA synthetase family. ProS type 1 subfamily. In terms of assembly, homodimer.

It localises to the cytoplasm. It catalyses the reaction tRNA(Pro) + L-proline + ATP = L-prolyl-tRNA(Pro) + AMP + diphosphate. Functionally, catalyzes the attachment of proline to tRNA(Pro) in a two-step reaction: proline is first activated by ATP to form Pro-AMP and then transferred to the acceptor end of tRNA(Pro). As ProRS can inadvertently accommodate and process non-cognate amino acids such as alanine and cysteine, to avoid such errors it has two additional distinct editing activities against alanine. One activity is designated as 'pretransfer' editing and involves the tRNA(Pro)-independent hydrolysis of activated Ala-AMP. The other activity is designated 'posttransfer' editing and involves deacylation of mischarged Ala-tRNA(Pro). The misacylated Cys-tRNA(Pro) is not edited by ProRS. The protein is Proline--tRNA ligase of Marinomonas sp. (strain MWYL1).